Reading from the N-terminus, the 884-residue chain is DNA mismatch repair protein MutS (884 aa).

ATP is bound at residue 651 to 658 (GPNMSGKS). The interval 843–884 (LRNQGKSQPAQKNCKKEPAPNRSPDPAVGDQLSLIPAPLFPD) is disordered.

Belongs to the DNA mismatch repair MutS family.

Functionally, this protein is involved in the repair of mismatches in DNA. It is possible that it carries out the mismatch recognition step. This protein has a weak ATPase activity. In Synechococcus sp. (strain JA-2-3B'a(2-13)) (Cyanobacteria bacterium Yellowstone B-Prime), this protein is DNA mismatch repair protein MutS.